A 536-amino-acid polypeptide reads, in one-letter code: CTP synthase (536 aa).

The interval 1 to 267 is amidoligase domain; sequence MSKFVFVTGG…CKETLRCLDL (267 aa). Residue Ser13 participates in CTP binding. Residue Ser13 participates in UTP binding. ATP is bound by residues 14-19 and Asp71; that span reads SIGKGI. Mg(2+) contacts are provided by Asp71 and Glu141. CTP contacts are provided by residues 148 to 150, 188 to 193, and Lys224; these read DIE and KTKPTQ. Residues 188-193 and Lys224 contribute to the UTP site; that span reads KTKPTQ. The region spanning 292-534 is the Glutamine amidotransferase type-1 domain; that stretch reads KVALVGKYIE…IKASREKLEQ (243 aa). Position 354 (Gly354) interacts with L-glutamine. Cys381 serves as the catalytic Nucleophile; for glutamine hydrolysis. Residues 382–385, Glu405, and Arg462 contribute to the L-glutamine site; that span reads LGMQ. Catalysis depends on residues His507 and Glu509.

It belongs to the CTP synthase family. In terms of assembly, homotetramer.

It catalyses the reaction UTP + L-glutamine + ATP + H2O = CTP + L-glutamate + ADP + phosphate + 2 H(+). The catalysed reaction is L-glutamine + H2O = L-glutamate + NH4(+). The enzyme catalyses UTP + NH4(+) + ATP = CTP + ADP + phosphate + 2 H(+). It participates in pyrimidine metabolism; CTP biosynthesis via de novo pathway; CTP from UDP: step 2/2. With respect to regulation, allosterically activated by GTP, when glutamine is the substrate; GTP has no effect on the reaction when ammonia is the substrate. The allosteric effector GTP functions by stabilizing the protein conformation that binds the tetrahedral intermediate(s) formed during glutamine hydrolysis. Inhibited by the product CTP, via allosteric rather than competitive inhibition. In terms of biological role, catalyzes the ATP-dependent amination of UTP to CTP with either L-glutamine or ammonia as the source of nitrogen. Regulates intracellular CTP levels through interactions with the four ribonucleotide triphosphates. The sequence is that of CTP synthase from Prochlorococcus marinus (strain MIT 9515).